Reading from the N-terminus, the 380-residue chain is Cytochrome b (380 aa).

The next 4 helical transmembrane spans lie at 34–54 (FGSL…FLAM), 78–99 (WLIR…YLHI), 114–134 (WNIG…GYVL), and 179–199 (FFTF…VHLL). Residues His-84 and His-98 each contribute to the heme b site. Heme b contacts are provided by His-183 and His-197. His-202 provides a ligand contact to a ubiquinone. The next 4 membrane-spanning stretches (helical) occupy residues 227–247 (YKDL…ALFT), 289–309 (LGGV…PILH), 321–341 (ISQL…WIGG), and 348–368 (FITI…ILFP).

This sequence belongs to the cytochrome b family. The cytochrome bc1 complex contains 3 respiratory subunits (MT-CYB, CYC1 and UQCRFS1), 2 core proteins (UQCRC1 and UQCRC2) and probably 6 low-molecular weight proteins. Requires heme b as cofactor.

The protein resides in the mitochondrion inner membrane. Its function is as follows. Component of the ubiquinol-cytochrome c reductase complex (complex III or cytochrome b-c1 complex) that is part of the mitochondrial respiratory chain. The b-c1 complex mediates electron transfer from ubiquinol to cytochrome c. Contributes to the generation of a proton gradient across the mitochondrial membrane that is then used for ATP synthesis. The polypeptide is Cytochrome b (mt-cyb) (Pastinachus sephen (Cowtail stingray)).